The sequence spans 274 residues: Large ribosomal subunit protein uL2 (274 aa).

The segment at 223-274 is disordered; the sequence is VAMNPVDHPHGGGEGKTSGGRHPVSPWGVPTKGYKTRSNKRTDKFIVRRRAK.

The protein belongs to the universal ribosomal protein uL2 family. Part of the 50S ribosomal subunit. Forms a bridge to the 30S subunit in the 70S ribosome.

In terms of biological role, one of the primary rRNA binding proteins. Required for association of the 30S and 50S subunits to form the 70S ribosome, for tRNA binding and peptide bond formation. It has been suggested to have peptidyltransferase activity; this is somewhat controversial. Makes several contacts with the 16S rRNA in the 70S ribosome. This chain is Large ribosomal subunit protein uL2, found in Colwellia psychrerythraea (strain 34H / ATCC BAA-681) (Vibrio psychroerythus).